The sequence spans 270 residues: DNA packaging protein OPG160 (270 aa).

25-32 contacts ATP; that stretch reads GGSGSGKT.

The protein belongs to the orthopoxvirus OPG160 protein family. In terms of assembly, interacts with protein OPG137.

In terms of biological role, participates in viral DNA packaging and virion morphogenesis. In Variola virus (isolate Human/India/Ind3/1967) (VARV), this protein is DNA packaging protein OPG160 (OPG160).